We begin with the raw amino-acid sequence, 324 residues long: Probable uridine nucleosidase 1 (324 aa).

Residue His-248 is part of the active site.

It belongs to the IUNH family.

The protein localises to the cytoplasm. The catalysed reaction is uridine + H2O = D-ribose + uracil. In terms of biological role, involved in pyrimidine breakdown. This chain is Probable uridine nucleosidase 1 (URH1), found in Oryza sativa subsp. japonica (Rice).